A 1163-amino-acid polypeptide reads, in one-letter code: Protein phosphatase 1 regulatory subunit 26 (1163 aa).

A compositionally biased stretch (basic and acidic residues) spans 65 to 83 (HERLTQRGQRAERSRDTRL). 7 disordered regions span residues 65–91 (HERL…AVCK), 144–253 (RGGA…TSAR), 266–393 (RKPP…KKKL), 463–496 (APME…NIDS), 514–653 (VGSP…DEDL), 672–929 (RDPR…TATA), and 1073–1163 (TQPG…GLKL). Polar residues-rich tracts occupy residues 163 to 179 (HSST…TPGS) and 189 to 201 (DQGS…MSSE). Basic and acidic residues predominate over residues 208–236 (IRAEIEQFLNEKRQHENPKCDGFVDKKSD). Residues 273-297 (KMSTQQRNFQPKPTTEPETPVSTKL) show a composition bias toward polar residues. Residues 315-324 (MPARRSKRIR) are compositionally biased toward basic residues. The span at 515–535 (GSPQPAQGPLSSPGPSGQPGI) shows a compositional bias: low complexity. Basic and acidic residues-rich tracts occupy residues 566–581 (KIRE…DHIQ) and 634–645 (ATEKESSEDKSS). Basic residues predominate over residues 672–682 (RDPRASCKKVR). The span at 766-780 (TGASGHPPSASSPTS) shows a compositional bias: low complexity. The segment covering 783–792 (SAVDSDDSIE) has biased composition (acidic residues). 2 stretches are compositionally biased toward basic and acidic residues: residues 793–808 (LEIR…ESIR) and 850–859 (EGRRGPERAR). The segment covering 860 to 871 (TQATGLLSQSGK) has biased composition (polar residues). Over residues 901–910 (SSAKASPPSR) the composition is skewed to low complexity. The span at 1105–1131 (QQDRRNSASEDKVLDLRYRHRVDREPQ) shows a compositional bias: basic and acidic residues. S1111 bears the Phosphoserine mark. 2 stretches are compositionally biased toward polar residues: residues 1133–1146 (QETL…FSDT) and 1154–1163 (ATVSSKGLKL).

As to quaternary structure, interacts with UTP20 and PPP1CA.

Its subcellular location is the nucleus. The protein localises to the nucleolus. In terms of biological role, inhibits phosphatase activity of protein phosphatase 1 (PP1) complexes. May positively regulate cell proliferation. This chain is Protein phosphatase 1 regulatory subunit 26 (Ppp1r26), found in Mus musculus (Mouse).